We begin with the raw amino-acid sequence, 344 residues long: Phosphoribosylformylglycinamidine cyclo-ligase (344 aa).

It belongs to the AIR synthase family.

Its subcellular location is the cytoplasm. It catalyses the reaction 2-formamido-N(1)-(5-O-phospho-beta-D-ribosyl)acetamidine + ATP = 5-amino-1-(5-phospho-beta-D-ribosyl)imidazole + ADP + phosphate + H(+). It functions in the pathway purine metabolism; IMP biosynthesis via de novo pathway; 5-amino-1-(5-phospho-D-ribosyl)imidazole from N(2)-formyl-N(1)-(5-phospho-D-ribosyl)glycinamide: step 2/2. The protein is Phosphoribosylformylglycinamidine cyclo-ligase of Bifidobacterium animalis subsp. lactis (strain AD011).